The chain runs to 306 residues: Mycothiol acetyltransferase (306 aa).

N-acetyltransferase domains lie at 17–163 (VARV…RPMP) and 166–306 (LALS…YRRA). Position 48 (Glu-48) interacts with 1D-myo-inositol 2-(L-cysteinylamino)-2-deoxy-alpha-D-glucopyranoside. Residue 89 to 91 (IVV) coordinates acetyl-CoA. Residues Glu-192, Lys-232, and Glu-239 each contribute to the 1D-myo-inositol 2-(L-cysteinylamino)-2-deoxy-alpha-D-glucopyranoside site. Acetyl-CoA contacts are provided by residues 243–245 (LGV) and 250–256 (AARGLGS). Tyr-277 provides a ligand contact to 1D-myo-inositol 2-(L-cysteinylamino)-2-deoxy-alpha-D-glucopyranoside.

Belongs to the acetyltransferase family. MshD subfamily. In terms of assembly, monomer.

The catalysed reaction is 1D-myo-inositol 2-(L-cysteinylamino)-2-deoxy-alpha-D-glucopyranoside + acetyl-CoA = mycothiol + CoA + H(+). Catalyzes the transfer of acetyl from acetyl-CoA to desacetylmycothiol (Cys-GlcN-Ins) to form mycothiol. This chain is Mycothiol acetyltransferase, found in Clavibacter michiganensis subsp. michiganensis (strain NCPPB 382).